The primary structure comprises 335 residues: Fructose-1,6-bisphosphatase class 1 1 (335 aa).

Glu92, Asp114, Leu116, and Asp117 together coordinate Mg(2+). Substrate-binding positions include 117–120 (DGSS), Asn209, and Lys275. Mg(2+) is bound at residue Glu281.

The protein belongs to the FBPase class 1 family. In terms of assembly, homotetramer. The cofactor is Mg(2+).

The protein localises to the cytoplasm. It carries out the reaction beta-D-fructose 1,6-bisphosphate + H2O = beta-D-fructose 6-phosphate + phosphate. It functions in the pathway carbohydrate biosynthesis; gluconeogenesis. This is Fructose-1,6-bisphosphatase class 1 1 from Polaromonas naphthalenivorans (strain CJ2).